The following is an 804-amino-acid chain: Leucine--tRNA ligase (804 aa).

The 'HIGH' region signature appears at 40–51 (PYPSGQGLHVGH). The short motif at 576–580 (KMSKS) is the 'KMSKS' region element. Residue Lys579 participates in ATP binding.

The protein belongs to the class-I aminoacyl-tRNA synthetase family.

The protein localises to the cytoplasm. It carries out the reaction tRNA(Leu) + L-leucine + ATP = L-leucyl-tRNA(Leu) + AMP + diphosphate. The sequence is that of Leucine--tRNA ligase from Oceanobacillus iheyensis (strain DSM 14371 / CIP 107618 / JCM 11309 / KCTC 3954 / HTE831).